A 278-amino-acid chain; its full sequence is Non-haem bromoperoxidase BPO-A2 (278 aa).

The AB hydrolase-1 domain occupies 26-264; the sequence is PVVLIHGFPL…GAPHGLLWTH (239 aa). Residues serine 99, aspartate 229, and histidine 258 contribute to the active site.

This sequence belongs to the AB hydrolase superfamily. Bacterial non-heme haloperoxidase / perhydrolase family. Homotrimer.

Its function is as follows. May be a chlorinating enzyme involved in 7-chlorotetracycline biosynthesis. This is Non-haem bromoperoxidase BPO-A2 (bpoA2) from Kitasatospora aureofaciens (Streptomyces aureofaciens).